A 101-amino-acid polypeptide reads, in one-letter code: Small ribosomal subunit protein uS14 (101 aa).

Positions 1–10 (MAKKSAIEKN) are enriched in basic and acidic residues. The interval 1 to 23 (MAKKSAIEKNNRRKKMTKNAAPK) is disordered. The span at 11–23 (NRRKKMTKNAAPK) shows a compositional bias: basic residues.

In terms of assembly, part of the 30S ribosomal subunit. Contacts proteins S3 and S10.

Binds 16S rRNA, required for the assembly of 30S particles and may also be responsible for determining the conformation of the 16S rRNA at the A site. The sequence is that of Small ribosomal subunit protein uS14 from Rhodopseudomonas palustris (strain ATCC BAA-98 / CGA009).